A 378-amino-acid polypeptide reads, in one-letter code: tRNA-specific 2-thiouridylase MnmA (378 aa).

ATP is bound by residues 9 to 16 (GVSGGVDS) and M35. Residues 94 to 96 (NPD) form an interaction with target base in tRNA region. C99 serves as the catalytic Nucleophile. A disulfide bridge connects residues C99 and C195. An ATP-binding site is contributed by G123. Residues 145–147 (KDQ) form an interaction with tRNA region. C195 acts as the Cysteine persulfide intermediate in catalysis. Positions 307-308 (RY) are interaction with tRNA.

Belongs to the MnmA/TRMU family.

The protein localises to the cytoplasm. The catalysed reaction is S-sulfanyl-L-cysteinyl-[protein] + uridine(34) in tRNA + AH2 + ATP = 2-thiouridine(34) in tRNA + L-cysteinyl-[protein] + A + AMP + diphosphate + H(+). Functionally, catalyzes the 2-thiolation of uridine at the wobble position (U34) of tRNA, leading to the formation of s(2)U34. In Xanthomonas oryzae pv. oryzae (strain MAFF 311018), this protein is tRNA-specific 2-thiouridylase MnmA.